Here is a 228-residue protein sequence, read N- to C-terminus: MQFIFFGTLFSGLLLVCAVTNDIEDASGETPGIVSQITEEQPHQRQKLYNWDYKDLGTIAFEDIPFPTLQPSQTIDQSENCPEGWIRYSDSCYWVETELLGFAKAERKCSEKQSTLFVANSIDEWEAIRGHSKDSFSSWIGLVRFSHYERSEQLPRWQTEGAVNPSKINWLIKPYSPLVNGWSQLANCAASYKSPASLETASYTYFYPCTYLFYSICERNSTIANSLH.

Residues 1–18 (MQFIFFGTLFSGLLLVCA) form the signal peptide. Ser27 carries O-linked (Xyl...) (chondroitin sulfate) serine glycosylation. The C-type lectin domain occupies 88-218 (YSDSCYWVET…CTYLFYSICE (131 aa)). Intrachain disulfides connect Cys109–Cys217 and Cys188–Cys209. An N-linked (GlcNAc...) asparagine glycan is attached at Asn220.

This is C-type lectin domain-containing protein 88 from Caenorhabditis elegans.